Reading from the N-terminus, the 210-residue chain is MENLIVAVVAYLIGSVSFAVIVSAAMGLADPRSYGSKNPGATNVLRSGNKKAAILTLIGDAFKGWLAVWLTGHFSAHFGLDDTSVAIAAIAVFLGHLYPVFFRFKGGKGVATAAGVLLAINPILGIATLLTWLIVAFFTRYSSLAALCAAIFAPLFDGFLFGANVIALSIVAMSALLIWRHRANIAKLVAGQESRIGDKKKAEAAASHKH.

5 consecutive transmembrane segments (helical) span residues 4-24, 52-72, 82-102, 118-138, and 159-179; these read LIVAVVAYLIGSVSFAVIVSA, AAILTLIGDAFKGWLAVWLTG, DTSVAIAAIAVFLGHLYPVFF, LAINPILGIATLLTWLIVAFF, and FLFGANVIALSIVAMSALLIW.

This sequence belongs to the PlsY family. Probably interacts with PlsX.

It is found in the cell inner membrane. It catalyses the reaction an acyl phosphate + sn-glycerol 3-phosphate = a 1-acyl-sn-glycero-3-phosphate + phosphate. The protein operates within lipid metabolism; phospholipid metabolism. Its function is as follows. Catalyzes the transfer of an acyl group from acyl-phosphate (acyl-PO(4)) to glycerol-3-phosphate (G3P) to form lysophosphatidic acid (LPA). This enzyme utilizes acyl-phosphate as fatty acyl donor, but not acyl-CoA or acyl-ACP. The chain is Glycerol-3-phosphate acyltransferase from Paraburkholderia phymatum (strain DSM 17167 / CIP 108236 / LMG 21445 / STM815) (Burkholderia phymatum).